A 53-amino-acid chain; its full sequence is IgW transmembrane form Tm1T3/Tm6T3/Tm3C4 (53 aa).

The disordered stretch occupies residues Val1–Asn25. A compositionally biased stretch (acidic residues) spans Gly13–Asp24. A helical membrane pass occupies residues Val29–Val49.

Expressed in the spleen, pancreas, peripheral blood lymphocytes and at low levels in the epigonal organ.

The protein localises to the membrane. The chain is IgW transmembrane form Tm1T3/Tm6T3/Tm3C4 from Ginglymostoma cirratum (Nurse shark).